Here is a 265-residue protein sequence, read N- to C-terminus: NADH dehydrogenase [ubiquinone] iron-sulfur protein 3, mitochondrial (265 aa).

Residues 1–33 (MAALIRNLGARAAVAALSAKHVVPAAGSTALRM) constitute a mitochondrion transit peptide.

The protein belongs to the complex I 30 kDa subunit family. As to quaternary structure, part of the mitochondrial membrane respiratory chain NADH dehydrogenase (Complex I). Interacts with sicily; interaction is stronger with unprocessed sicily protein.

It localises to the mitochondrion. It carries out the reaction a ubiquinone + NADH + 5 H(+)(in) = a ubiquinol + NAD(+) + 4 H(+)(out). Its function is as follows. Core subunit of the mitochondrial membrane respiratory chain NADH dehydrogenase (Complex I) that is believed to belong to the minimal assembly required for catalysis. Complex I functions in the transfer of electrons from NADH to the respiratory chain. The immediate electron acceptor for the enzyme is believed to be ubiquinone. This is NADH dehydrogenase [ubiquinone] iron-sulfur protein 3, mitochondrial from Drosophila melanogaster (Fruit fly).